The chain runs to 707 residues: Polyribonucleotide nucleotidyltransferase (707 aa).

2 residues coordinate Mg(2+): Asp-488 and Asp-494. The KH domain maps to Pro-554–Ile-613. One can recognise an S1 motif domain in the interval Gly-623–Lys-693.

The protein belongs to the polyribonucleotide nucleotidyltransferase family. The cofactor is Mg(2+).

Its subcellular location is the cytoplasm. The enzyme catalyses RNA(n+1) + phosphate = RNA(n) + a ribonucleoside 5'-diphosphate. Its function is as follows. Involved in mRNA degradation. Catalyzes the phosphorolysis of single-stranded polyribonucleotides processively in the 3'- to 5'-direction. This Neisseria meningitidis serogroup B (strain ATCC BAA-335 / MC58) protein is Polyribonucleotide nucleotidyltransferase.